The following is a 416-amino-acid chain: Serine hydroxymethyltransferase (416 aa).

Residues Leu121 and 125-127 (GHL) contribute to the (6S)-5,6,7,8-tetrahydrofolate site. Lys230 bears the N6-(pyridoxal phosphate)lysine mark.

Belongs to the SHMT family. In terms of assembly, homodimer. Pyridoxal 5'-phosphate is required as a cofactor.

It is found in the cytoplasm. It catalyses the reaction (6R)-5,10-methylene-5,6,7,8-tetrahydrofolate + glycine + H2O = (6S)-5,6,7,8-tetrahydrofolate + L-serine. Its pathway is one-carbon metabolism; tetrahydrofolate interconversion. The protein operates within amino-acid biosynthesis; glycine biosynthesis; glycine from L-serine: step 1/1. Its function is as follows. Catalyzes the reversible interconversion of serine and glycine with tetrahydrofolate (THF) serving as the one-carbon carrier. This reaction serves as the major source of one-carbon groups required for the biosynthesis of purines, thymidylate, methionine, and other important biomolecules. Also exhibits THF-independent aldolase activity toward beta-hydroxyamino acids, producing glycine and aldehydes, via a retro-aldol mechanism. This chain is Serine hydroxymethyltransferase, found in Nitrosospira multiformis (strain ATCC 25196 / NCIMB 11849 / C 71).